A 162-amino-acid chain; its full sequence is UPF0114 protein PST_0950 (162 aa).

3 helical membrane-spanning segments follow: residues 15–35, 53–73, and 136–156; these read LLAP…IKFF, LVLT…LVMV, and LMWY…MGYM.

This sequence belongs to the UPF0114 family.

It is found in the cell membrane. This is UPF0114 protein PST_0950 from Stutzerimonas stutzeri (strain A1501) (Pseudomonas stutzeri).